A 495-amino-acid polypeptide reads, in one-letter code: Muscle LIM protein Mlp84B (495 aa).

Residues C12–C63 enclose the LIM zinc-binding 1 domain. The Nuclear localization signal motif lies at R66–K71. The LIM zinc-binding 2 domain occupies C120–C172. Positions K175 to K180 match the Nuclear localization signal motif. LIM zinc-binding domains are found at residues C222–C274, C325–C377, and C421–C473.

In terms of tissue distribution, in the embryo, expression is restricted to the somatic, visceral, and pharyngeal muscles. Within the somatic musculature, expression is localized at the ends of muscles fibers at the point of attachment to the epidermis (at protein level). There is no expression in cardiac mesoderm or in fat body.

Its subcellular location is the cytoplasm. It is found in the nucleus. Its function is as follows. Plays a role in cell differentiation late in myogenesis. Transcription factor Mef2 is essential for expression. The sequence is that of Muscle LIM protein Mlp84B from Drosophila melanogaster (Fruit fly).